The sequence spans 296 residues: Protoheme IX farnesyltransferase (296 aa).

Over 1 to 9 the chain is Cytoplasmic; it reads MMFKQYLQV. A helical transmembrane segment spans residues 10-28; sequence TKPGIIFGNLISVIGGFLL. At 29–37 the chain is on the periplasmic side; the sequence is ASKGSIDYP. The helical transmembrane segment at 38-56 threads the bilayer; the sequence is LFIYTLVGVSLVVASGCVF. The Cytoplasmic segment spans residues 57–78; it reads NNYIDRDIDRKMERTKNRVLVK. The helical transmembrane segment at 79–97 threads the bilayer; the sequence is GLISPAVSLVYATLLGIAG. The Periplasmic segment spans residues 98–107; that stretch reads FMLLWFGANP. The chain crosses the membrane as a helical span at residues 108–126; sequence LACWLGVMGFVVYVGVYSL. Residues 127-197 lie on the Cytoplasmic side of the membrane; sequence YMKRHSVYGT…YQAANIPVLP (71 aa). The chain crosses the membrane as a helical span at residues 198-216; that stretch reads VVKGISVAKNHITLYIIAF. The Periplasmic segment spans residues 217-228; that stretch reads AVATLMLSLGGY. Residues 229 to 247 traverse the membrane as a helical segment; the sequence is AGYKYLVVAAAVSVWWLGM. The Cytoplasmic segment spans residues 248–268; that stretch reads ALRGYKVADDRIWARKLFGFS. The helical transmembrane segment at 269–287 threads the bilayer; sequence IIAITALSVMMSVDFMVPD. Residues 288–296 lie on the Periplasmic side of the membrane; it reads SHTLLAAVW.

This sequence belongs to the UbiA prenyltransferase family. Protoheme IX farnesyltransferase subfamily.

Its subcellular location is the cell inner membrane. It catalyses the reaction heme b + (2E,6E)-farnesyl diphosphate + H2O = Fe(II)-heme o + diphosphate. It functions in the pathway porphyrin-containing compound metabolism; heme O biosynthesis; heme O from protoheme: step 1/1. In terms of biological role, converts heme B (protoheme IX) to heme O by substitution of the vinyl group on carbon 2 of heme B porphyrin ring with a hydroxyethyl farnesyl side group. This is Protoheme IX farnesyltransferase from Escherichia coli O139:H28 (strain E24377A / ETEC).